Consider the following 494-residue polypeptide: Fumarate hydratase, mitochondrial (494 aa).

The transit peptide at 1–15 (MLRASATRFLSQAKN) directs the protein to the mitochondrion. Residues 128–130 (SGT), 159–162 (HPND), 169–171 (SSN), and Thr-217 contribute to the substrate site. His-218 (proton donor/acceptor) is an active-site residue. Ser-348 is an active-site residue. Substrate contacts are provided by residues Ser-349 and 354 to 356 (KVN).

This sequence belongs to the class-II fumarase/aspartase family. Fumarase subfamily. As to quaternary structure, homotetramer.

The protein resides in the mitochondrion matrix. It is found in the cytoplasm. The protein localises to the nucleus. The enzyme catalyses (S)-malate = fumarate + H2O. It functions in the pathway carbohydrate metabolism; tricarboxylic acid cycle; (S)-malate from fumarate: step 1/1. In terms of biological role, catalyzes the reversible stereospecific interconversion of fumarate to L-malate. In mitochondrion, catalyzes the hydration of fumarate to L-malate in the tricarboxylic acid (TCA) cycle to facilitate a transition step in the production of energy in the form of NADH. In cytoplasm and nucleus, involved in DNA repair in response to DNA damage: following DNA double-strand breaks (DSBs), translocates from the cytosol to the nucleus and promotes DNA repair by catalyzing the dehydration of L-malate to fumarate. In Rhizopus oryzae (Mucormycosis agent), this protein is Fumarate hydratase, mitochondrial.